We begin with the raw amino-acid sequence, 237 residues long: NAD-dependent protein deacylase (237 aa).

Residues 1–235 (MRVAVLSGAG…PGLLERLPAL (235 aa)) form the Deacetylase sirtuin-type domain. 8 to 28 (GAGISAESGVPTFRDDKNGLW) is a binding site for NAD(+). 2 residues coordinate substrate: Y53 and R56. Residue 86 to 89 (QNVD) coordinates NAD(+). H104 serves as the catalytic Proton acceptor. Zn(2+) contacts are provided by C112, C115, C138, and C140. NAD(+) contacts are provided by residues 177 to 179 (GTS), 203 to 205 (NPE), and A221.

The protein belongs to the sirtuin family. Class III subfamily. It depends on Zn(2+) as a cofactor.

It localises to the cytoplasm. It catalyses the reaction N(6)-acetyl-L-lysyl-[protein] + NAD(+) + H2O = 2''-O-acetyl-ADP-D-ribose + nicotinamide + L-lysyl-[protein]. The enzyme catalyses N(6)-succinyl-L-lysyl-[protein] + NAD(+) + H2O = 2''-O-succinyl-ADP-D-ribose + nicotinamide + L-lysyl-[protein]. In terms of biological role, NAD-dependent lysine deacetylase and desuccinylase that specifically removes acetyl and succinyl groups on target proteins. Modulates the activities of several proteins which are inactive in their acylated form. This Mycobacterium bovis (strain ATCC BAA-935 / AF2122/97) protein is NAD-dependent protein deacylase.